We begin with the raw amino-acid sequence, 87 residues long: Defensin-like protein 176 (87 aa).

An N-terminal signal peptide occupies residues 1 to 23 (MAKATSSLVVPIIFLVIFALVEQ). 4 disulfides stabilise this stretch: cysteine 27-cysteine 66, cysteine 36-cysteine 55, cysteine 39-cysteine 60, and cysteine 43-cysteine 62.

Belongs to the DEFL family.

The protein resides in the secreted. This Arabidopsis thaliana (Mouse-ear cress) protein is Defensin-like protein 176 (LCR65).